The chain runs to 338 residues: Biotin synthase (338 aa).

Positions 46-270 (NEVQLSTLLS…VAVARITMPA (225 aa)) constitute a Radical SAM core domain. [4Fe-4S] cluster is bound by residues C61, C65, and C68. C105, C136, C196, and R274 together coordinate [2Fe-2S] cluster.

This sequence belongs to the radical SAM superfamily. Biotin synthase family. In terms of assembly, homodimer. [4Fe-4S] cluster serves as cofactor. It depends on [2Fe-2S] cluster as a cofactor.

The enzyme catalyses (4R,5S)-dethiobiotin + (sulfur carrier)-SH + 2 reduced [2Fe-2S]-[ferredoxin] + 2 S-adenosyl-L-methionine = (sulfur carrier)-H + biotin + 2 5'-deoxyadenosine + 2 L-methionine + 2 oxidized [2Fe-2S]-[ferredoxin]. Its pathway is cofactor biosynthesis; biotin biosynthesis; biotin from 7,8-diaminononanoate: step 2/2. Catalyzes the conversion of dethiobiotin (DTB) to biotin by the insertion of a sulfur atom into dethiobiotin via a radical-based mechanism. The polypeptide is Biotin synthase (Rhizorhabdus wittichii (strain DSM 6014 / CCUG 31198 / JCM 15750 / NBRC 105917 / EY 4224 / RW1) (Sphingomonas wittichii)).